The primary structure comprises 637 residues: 3D-(3,5/4)-trihydroxycyclohexane-1,2-dione hydrolase (637 aa).

Residue glutamate 66 coordinates thiamine diphosphate. The thiamine pyrophosphate binding stretch occupies residues 442–522 (SLPGDLQRLW…INVLLFDNSG (81 aa)). Mg(2+) contacts are provided by aspartate 493 and asparagine 520.

This sequence belongs to the TPP enzyme family. Mg(2+) is required as a cofactor. It depends on thiamine diphosphate as a cofactor.

It catalyses the reaction 3D-3,5/4-trihydroxycyclohexane-1,2-dione + H2O = 5-deoxy-D-glucuronate + H(+). Its pathway is polyol metabolism; myo-inositol degradation into acetyl-CoA; acetyl-CoA from myo-inositol: step 3/7. In terms of biological role, involved in the cleavage of the C1-C2 bond of 3D-(3,5/4)-trihydroxycyclohexane-1,2-dione (THcHDO) to yield 5-deoxy-glucuronate (5DG). In Bacillus velezensis (strain DSM 23117 / BGSC 10A6 / LMG 26770 / FZB42) (Bacillus amyloliquefaciens subsp. plantarum), this protein is 3D-(3,5/4)-trihydroxycyclohexane-1,2-dione hydrolase.